A 188-amino-acid chain; its full sequence is Photosystem I assembly protein Ycf4 (188 aa).

The next 2 membrane-spanning stretches (helical) occupy residues 22 to 42 (LGWASVLLLGTSGFLLTGLSS) and 68 to 88 (LVMCFYGIAGLFLSTYLWCAI).

Belongs to the Ycf4 family.

Its subcellular location is the plastid. It localises to the chloroplast thylakoid membrane. Its function is as follows. Seems to be required for the assembly of the photosystem I complex. This Zygnema circumcarinatum (Green alga) protein is Photosystem I assembly protein Ycf4.